Consider the following 289-residue polypeptide: 3-methyl-2-oxobutanoate hydroxymethyltransferase (289 aa).

Positions 1 to 15 are enriched in polar residues; it reads MSTTFKLDTSTSRAN. The segment at 1–21 is disordered; the sequence is MSTTFKLDTSTSRANPTPAPM. Mg(2+) is bound by residues Asp67 and Asp106. 3-methyl-2-oxobutanoate-binding positions include 67–68, Asp106, and Lys136; that span reads DS. Residue Glu138 participates in Mg(2+) binding. Glu205 (proton acceptor) is an active-site residue.

The protein belongs to the PanB family. In terms of assembly, homodecamer; pentamer of dimers. It depends on Mg(2+) as a cofactor.

The protein resides in the cytoplasm. The enzyme catalyses 3-methyl-2-oxobutanoate + (6R)-5,10-methylene-5,6,7,8-tetrahydrofolate + H2O = 2-dehydropantoate + (6S)-5,6,7,8-tetrahydrofolate. It functions in the pathway cofactor biosynthesis; (R)-pantothenate biosynthesis; (R)-pantoate from 3-methyl-2-oxobutanoate: step 1/2. Catalyzes the reversible reaction in which hydroxymethyl group from 5,10-methylenetetrahydrofolate is transferred onto alpha-ketoisovalerate to form ketopantoate. The polypeptide is 3-methyl-2-oxobutanoate hydroxymethyltransferase (Erythrobacter litoralis (strain HTCC2594)).